Consider the following 155-residue polypeptide: Small ribosomal subunit protein uS7cz/uS7cy (155 aa).

This sequence belongs to the universal ribosomal protein uS7 family. As to quaternary structure, part of the 30S ribosomal subunit.

It localises to the plastid. The protein resides in the chloroplast. One of the primary rRNA binding proteins, it binds directly to 16S rRNA where it nucleates assembly of the head domain of the 30S subunit. The sequence is that of Small ribosomal subunit protein uS7cz/uS7cy (rps7-A) from Eucalyptus globulus subsp. globulus (Tasmanian blue gum).